A 116-amino-acid chain; its full sequence is MADLIPLAQARCVPRKGSDHKLGEARLAELLPQVPGWELSEGGQALLRTFRFKNYYATMAFVNALAWIAHHEDHHPDLGVHYDRAVVRFSTHDVGGLSENDFICAAKTSALTEQLP.

It belongs to the pterin-4-alpha-carbinolamine dehydratase family.

The enzyme catalyses (4aS,6R)-4a-hydroxy-L-erythro-5,6,7,8-tetrahydrobiopterin = (6R)-L-erythro-6,7-dihydrobiopterin + H2O. In Stenotrophomonas maltophilia (strain R551-3), this protein is Putative pterin-4-alpha-carbinolamine dehydratase.